Here is a 323-residue protein sequence, read N- to C-terminus: Olfactory receptor 2AE1 (323 aa).

At 1–25 (MWQKNQTSLADFILEGLFDDSLTHL) the chain is on the extracellular side. Asparagine 5 carries N-linked (GlcNAc...) asparagine glycosylation. A helical membrane pass occupies residues 26–49 (FLFSLTMVVFLIAVSGNTLTILLI). Residues 50 to 57 (CIDPQLHT) lie on the Cytoplasmic side of the membrane. The helical transmembrane segment at 58 to 79 (PMYFLLSQLSLMDLMHVSTIIL) threads the bilayer. The Extracellular portion of the chain corresponds to 80–100 (KMATNYLSGKKSISFVGCATQ). Residues cysteine 97 and cysteine 189 are joined by a disulfide bond. A helical membrane pass occupies residues 101–120 (HFLYLCLGGAECFLLAVMSY). Topologically, residues 121–139 (DRYVAICHPLRYAVLMNKK) are cytoplasmic. The helical transmembrane segment at 140-158 (VGLMMAVMSWLGASVNSLI) threads the bilayer. Residues 159-195 (HMAILMHFPFCGPRKVYHFYCEFPAVVKLVCGDITVY) are Extracellular-facing. A helical membrane pass occupies residues 196 to 218 (ETTVYISSILLLLPIFLISTSYV). Over 219–235 (FILQSVIQMRSSGSKRN) the chain is Cytoplasmic. Residues 236-258 (AFATCGSHLTVVSLWFGACIFSY) form a helical membrane-spanning segment. Residues 259 to 271 (MRPRSQCTLLQNK) lie on the Extracellular side of the membrane. The chain crosses the membrane as a helical span at residues 272–291 (VGSVFYSIITPTLNSLIYTL). At 292 to 323 (RNKDVAKALRRVLRRDVITQCIQRLQLWLPRV) the chain is on the cytoplasmic side.

This sequence belongs to the G-protein coupled receptor 1 family.

Its subcellular location is the cell membrane. Its function is as follows. Odorant receptor. The polypeptide is Olfactory receptor 2AE1 (OR2AE1) (Homo sapiens (Human)).